A 341-amino-acid chain; its full sequence is Thymidine kinase (341 aa).

19–26 serves as a coordination point for ATP; the sequence is GAYGIGKT. The active-site Proton acceptor is the E48. Residues Y66 and Q90 each contribute to the substrate site. R183 contributes to the ATP binding site. R189 contributes to the substrate binding site.

Belongs to the herpesviridae thymidine kinase family. As to quaternary structure, homodimer.

It carries out the reaction thymidine + ATP = dTMP + ADP + H(+). Functionally, catalyzes the transfer of the gamma-phospho group of ATP to thymidine to generate dTMP in the salvage pathway of pyrimidine synthesis. The dTMP serves as a substrate for DNA polymerase during viral DNA replication. Allows the virus to be reactivated and to grow in non-proliferative cells lacking a high concentration of phosphorylated nucleic acid precursors. The sequence is that of Thymidine kinase from Varicella-zoster virus (strain Dumas) (HHV-3).